Consider the following 159-residue polypeptide: Phosphopantetheine adenylyltransferase (159 aa).

Ser-9 lines the substrate pocket. ATP is bound by residues 9 to 10 (SF) and His-17. Substrate contacts are provided by Lys-41, Leu-73, and Arg-87. ATP is bound by residues 88-90 (GLR), Glu-98, and 123-129 (YSYVSSS).

It belongs to the bacterial CoaD family. As to quaternary structure, homohexamer. Mg(2+) is required as a cofactor.

It is found in the cytoplasm. It carries out the reaction (R)-4'-phosphopantetheine + ATP + H(+) = 3'-dephospho-CoA + diphosphate. It functions in the pathway cofactor biosynthesis; coenzyme A biosynthesis; CoA from (R)-pantothenate: step 4/5. Reversibly transfers an adenylyl group from ATP to 4'-phosphopantetheine, yielding dephospho-CoA (dPCoA) and pyrophosphate. This chain is Phosphopantetheine adenylyltransferase, found in Shouchella clausii (strain KSM-K16) (Alkalihalobacillus clausii).